The chain runs to 220 residues: Fructose-6-phosphate aldolase (220 aa).

K85 acts as the Schiff-base intermediate with substrate in catalysis.

The protein belongs to the transaldolase family. Type 3A subfamily. In terms of assembly, homodecamer.

The protein localises to the cytoplasm. The catalysed reaction is beta-D-fructose 6-phosphate = dihydroxyacetone + D-glyceraldehyde 3-phosphate. In terms of biological role, catalyzes the reversible formation of fructose 6-phosphate from dihydroxyacetone and D-glyceraldehyde 3-phosphate via an aldolization reaction. The protein is Fructose-6-phosphate aldolase of Klebsiella pneumoniae subsp. pneumoniae (strain ATCC 700721 / MGH 78578).